The sequence spans 443 residues: MPYVPHSPEEIREMLDVIGVNSVEDLFAEIPAELRPKSFNLPKGKSEMAVLQQLDKMAAKNTTDLTSFLGAGFYDHFIPTAVDALSSRSEFYTAYTPYQPESSQGTLQAIFEYQTAMARLMDMDYANASVYDGGSALYEATLMAVRKTRRRKIIVSEALNPIYRVMLDSYTTNLNLELVTVPHNHGRTNVKSITAAVDKDTAAVIVQNPNFFGSVNDFTEMFAAVHEHKALAIMSTYPVMQSVLKTPGQMGADIAVADGQSIGQPLSFGGPYLGIMTCSKALVRQMPGRIAGRTEDEDGKTGYVLTIQAREQHIRRQKATSNICSNQALCALRTLIHLCLLGEEGLNRTAVLSVERAHYAAERLTAIDGVEMFTKGPFGNEFAVTLPVNAFEVIDKLTERGIIPGFPVGRYYEGLENVLLVACTEKTTEEQIGIFAEILRGTI.

It belongs to the GcvP family. N-terminal subunit subfamily. The glycine cleavage system is composed of four proteins: P, T, L and H. In this organism, the P 'protein' is a heterodimer of two subunits.

The enzyme catalyses N(6)-[(R)-lipoyl]-L-lysyl-[glycine-cleavage complex H protein] + glycine + H(+) = N(6)-[(R)-S(8)-aminomethyldihydrolipoyl]-L-lysyl-[glycine-cleavage complex H protein] + CO2. Functionally, the glycine cleavage system catalyzes the degradation of glycine. The P protein binds the alpha-amino group of glycine through its pyridoxal phosphate cofactor; CO(2) is released and the remaining methylamine moiety is then transferred to the lipoamide cofactor of the H protein. This chain is Probable glycine dehydrogenase (decarboxylating) subunit 1, found in Maridesulfovibrio salexigens (strain ATCC 14822 / DSM 2638 / NCIMB 8403 / VKM B-1763) (Desulfovibrio salexigens).